A 239-amino-acid chain; its full sequence is ATP synthase subunit a (239 aa).

5 consecutive transmembrane segments (helical) span residues 13–33, 75–95, 113–133, 174–194, and 208–230; these read IWFD…VFAF, FHLM…LGLV, DPIV…FFGM, GNIF…ASVG, and WVAF…SMVY.

Belongs to the ATPase A chain family. In terms of assembly, F-type ATPases have 2 components, CF(1) - the catalytic core - and CF(0) - the membrane proton channel. CF(1) has five subunits: alpha(3), beta(3), gamma(1), delta(1), epsilon(1). CF(0) has three main subunits: a(1), b(2) and c(9-12). The alpha and beta chains form an alternating ring which encloses part of the gamma chain. CF(1) is attached to CF(0) by a central stalk formed by the gamma and epsilon chains, while a peripheral stalk is formed by the delta and b chains.

The protein resides in the cell membrane. In terms of biological role, key component of the proton channel; it plays a direct role in the translocation of protons across the membrane. The sequence is that of ATP synthase subunit a from Enterococcus faecalis (strain ATCC 700802 / V583).